The chain runs to 119 residues: Large ribosomal subunit protein bL19 (119 aa).

This sequence belongs to the bacterial ribosomal protein bL19 family.

This protein is located at the 30S-50S ribosomal subunit interface and may play a role in the structure and function of the aminoacyl-tRNA binding site. The chain is Large ribosomal subunit protein bL19 from Pelobacter propionicus (strain DSM 2379 / NBRC 103807 / OttBd1).